Consider the following 393-residue polypeptide: MDSISKYDNKCAIHKEHKIKMICATCKDVVCNECILLDHNGHKFGRIDVENSKEIFEEFKNNHLQNLDKQIGINNELLNESNNLFKSLEDKHTENVNTITEVFKELPKLLPIIEIDKIKQLVTLYDENKDINTNISTIVHDYSNNINLITNKYKNTINQINIDQIINDNNSYQHIEILKHCCQSRLLIKDNQNENKINELMDQYKNVNFVNNSEQVKESIKEIFEISNSLSITNVKDPKRVIAGGKECFIYKNDSIIPNGTTHLAIAPSVKTIKIGSIPTSVKYLVLLDGFNVQLKEGMLPQSITHLFVGAIKKPLLKGSIPNGVTDLSLLDGFNQKITEIPQSTVHLYLFDTPLTNFPFQNFILRTSKYKQQFAHPKVKDWNLSTWEPKIEL.

A B box-type zinc finger spans residues 6–47 (KYDNKCAIHKEHKIKMICATCKDVVCNECILLDHNGHKFGRI). Zn(2+)-binding residues include C11, H14, C34, and H39.

This is an uncharacterized protein from Dictyostelium discoideum (Social amoeba).